The sequence spans 155 residues: Large ribosomal subunit protein uL15 (155 aa).

A compositionally biased stretch (basic and acidic residues) spans 1-13 (MKLNELRDAEGAT). The disordered stretch occupies residues 1 to 41 (MKLNELRDAEGATKARKRVGRGIGSGSGKTGGRGVKGQKSR). Gly residues predominate over residues 21-35 (RGIGSGSGKTGGRGV).

The protein belongs to the universal ribosomal protein uL15 family. Part of the 50S ribosomal subunit.

Functionally, binds to the 23S rRNA. The polypeptide is Large ribosomal subunit protein uL15 (Chelativorans sp. (strain BNC1)).